Here is a 100-residue protein sequence, read N- to C-terminus: EPLCRRQFQQHQHLRACQRYLRRRAQRGEQRGPALRLCCNQLRQVNKPCVCPVLRQAAHQQLYQGQIEGPRQVRRLFRAARNLPNICKIPAVGRCQFTRW.

4 disulfide bridges follow: Cys4–Cys49, Cys17–Cys38, Cys39–Cys87, and Cys51–Cys95.

The protein belongs to the 2S seed storage albumins family. Heterodimer of a small A and a large B chain linked by disulfide bonds.

Heat stable 2S seed storage protein having sweetness-inducing activity. The sequence is that of Sweet protein mabinlin-4 from Capparis masaikai (Mabinlang).